Consider the following 302-residue polypeptide: Proline dehydrogenase 1 (302 aa).

K95 provides a ligand contact to substrate. Residue D129 is part of the active site. Residues M130 and Q158 each contribute to the FAD site. R179 is an active-site residue. FAD contacts are provided by residues 182-184 (KGA) and 221-222 (TH). Residue 283–284 (RR) coordinates substrate.

The protein belongs to the proline dehydrogenase family. FAD serves as cofactor.

It catalyses the reaction L-proline + a quinone = (S)-1-pyrroline-5-carboxylate + a quinol + H(+). The protein operates within amino-acid degradation; L-proline degradation into L-glutamate; L-glutamate from L-proline: step 1/2. Functionally, converts proline to delta-1-pyrroline-5-carboxylate. The sequence is that of Proline dehydrogenase 1 (fadM) from Bacillus subtilis (strain 168).